A 209-amino-acid polypeptide reads, in one-letter code: Probable GTP-binding protein EngB (209 aa).

One can recognise an EngB-type G domain in the interval 12-203 (INLEIIFAGR…RDRLHEMKRD (192 aa)). Residues 20 to 27 (GRSNVGKS), 45 to 49 (GVTLR), 62 to 65 (DMPG), 142 to 145 (NKMD), and 179 to 181 (ISA) contribute to the GTP site. Residues serine 27 and threonine 47 each coordinate Mg(2+).

The protein belongs to the TRAFAC class TrmE-Era-EngA-EngB-Septin-like GTPase superfamily. EngB GTPase family. The cofactor is Mg(2+).

In terms of biological role, necessary for normal cell division and for the maintenance of normal septation. This is Probable GTP-binding protein EngB from Methanosarcina mazei (strain ATCC BAA-159 / DSM 3647 / Goe1 / Go1 / JCM 11833 / OCM 88) (Methanosarcina frisia).